Here is a 481-residue protein sequence, read N- to C-terminus: uncharacterized protein (481 aa).

A run of 10 helical transmembrane segments spans residues 30–50 (TIII…FVQF), 96–116 (AIAL…FIGM), 154–174 (CMAV…FNSV), 196–216 (ISLV…IAII), 220–240 (LVPM…GMHI), 250–270 (IVQS…ALVS), 311–331 (MLGV…IILL), 354–374 (IGEF…YSSI), 391–411 (KPWL…FGAV), and 424–444 (VMAV…PIVW).

It belongs to the alanine or glycine:cation symporter (AGCS) (TC 2.A.25) family.

The protein localises to the cell inner membrane. This is an uncharacterized protein from Haemophilus influenzae (strain ATCC 51907 / DSM 11121 / KW20 / Rd).